Reading from the N-terminus, the 118-residue chain is Large ribosomal subunit protein bL20 (118 aa).

The protein belongs to the bacterial ribosomal protein bL20 family.

Binds directly to 23S ribosomal RNA and is necessary for the in vitro assembly process of the 50S ribosomal subunit. It is not involved in the protein synthesizing functions of that subunit. The sequence is that of Large ribosomal subunit protein bL20 from Staphylococcus saprophyticus subsp. saprophyticus (strain ATCC 15305 / DSM 20229 / NCIMB 8711 / NCTC 7292 / S-41).